Reading from the N-terminus, the 35-residue chain is Photosystem II reaction center protein T (35 aa).

A helical transmembrane segment spans residues 3 to 23; it reads ALVYTFLLVSTLGIIFFAIFF.

It belongs to the PsbT family. In terms of assembly, PSII is composed of 1 copy each of membrane proteins PsbA, PsbB, PsbC, PsbD, PsbE, PsbF, PsbH, PsbI, PsbJ, PsbK, PsbL, PsbM, PsbT, PsbY, PsbZ, Psb30/Ycf12, at least 3 peripheral proteins of the oxygen-evolving complex and a large number of cofactors. It forms dimeric complexes.

Its subcellular location is the plastid. The protein resides in the chloroplast thylakoid membrane. Functionally, found at the monomer-monomer interface of the photosystem II (PS II) dimer, plays a role in assembly and dimerization of PSII. PSII is a light-driven water plastoquinone oxidoreductase, using light energy to abstract electrons from H(2)O, generating a proton gradient subsequently used for ATP formation. The protein is Photosystem II reaction center protein T of Gossypium barbadense (Sea Island cotton).